A 125-amino-acid polypeptide reads, in one-letter code: Glycine cleavage system H protein 1 (125 aa).

A Lipoyl-binding domain is found at 22–103; the sequence is KAYIGITDYA…PYGSWLVAVR (82 aa). N6-lipoyllysine is present on Lys-63.

It belongs to the GcvH family. The glycine cleavage system is composed of four proteins: P, T, L and H. (R)-lipoate is required as a cofactor.

In terms of biological role, the glycine cleavage system catalyzes the degradation of glycine. The H protein shuttles the methylamine group of glycine from the P protein to the T protein. This is Glycine cleavage system H protein 1 from Caldanaerobacter subterraneus subsp. tengcongensis (strain DSM 15242 / JCM 11007 / NBRC 100824 / MB4) (Thermoanaerobacter tengcongensis).